A 210-amino-acid polypeptide reads, in one-letter code: Glutathione S-transferase P (210 aa).

A GST N-terminal domain is found at proline 2 to glycine 81. Tyrosine 4 is subject to Phosphotyrosine; by EGFR. Glutathione-binding positions include tyrosine 8, arginine 14, tryptophan 39, lysine 45, glutamine 52–leucine 53, and glutamine 65–serine 66. Residues aspartate 83–isoleucine 204 form the GST C-terminal domain. Lysine 103 and lysine 116 each carry N6-succinyllysine. Position 128 is an N6-acetyllysine (lysine 128).

It belongs to the GST superfamily. Pi family. Homodimer. Interacts with CDK5.

The protein resides in the cytoplasm. It localises to the mitochondrion. Its subcellular location is the nucleus. It catalyses the reaction RX + glutathione = an S-substituted glutathione + a halide anion + H(+). The enzyme catalyses prostaglandin J2 + glutathione = prostaglandin J2-S-(R)-glutathione. It carries out the reaction prostaglandin J2 + glutathione = prostaglandin J2-S-(S)-glutathione. The catalysed reaction is prostaglandin A2 + glutathione = prostaglandin A2-S-(S)-glutathione. It catalyses the reaction 11(S)-hydroxy-14(S),15(S)-epoxy-(5Z,8Z,12E)-eicosatrienoate + glutathione = (11S,15S)-dihydroxy-14(R)-S-glutathionyl-(5Z,8Z,12E)-eicosatrienoate. In terms of biological role, conjugation of reduced glutathione to a wide number of exogenous and endogenous hydrophobic electrophiles. Involved in the formation of glutathione conjugates of both prostaglandin A2 (PGA2) and prostaglandin J2 (PGJ2). Participates in the formation of novel hepoxilin regioisomers. Negatively regulates CDK5 activity via p25/p35 translocation to prevent neurodegeneration. The polypeptide is Glutathione S-transferase P (GSTP1) (Mesocricetus auratus (Golden hamster)).